The sequence spans 190 residues: GTP cyclohydrolase 1 (190 aa).

Residues Cys-79, His-82, and Cys-151 each coordinate Zn(2+).

This sequence belongs to the GTP cyclohydrolase I family. In terms of assembly, toroid-shaped homodecamer, composed of two pentamers of five dimers.

It carries out the reaction GTP + H2O = 7,8-dihydroneopterin 3'-triphosphate + formate + H(+). It functions in the pathway cofactor biosynthesis; 7,8-dihydroneopterin triphosphate biosynthesis; 7,8-dihydroneopterin triphosphate from GTP: step 1/1. The chain is GTP cyclohydrolase 1 from Clostridioides difficile (strain 630) (Peptoclostridium difficile).